Reading from the N-terminus, the 464-residue chain is Kynureninase (464 aa).

At M1 the chain carries N-acetylmethionine. Pyridoxal 5'-phosphate contacts are provided by residues L137, T138, 165–168 (FPSD), S221, D250, H253, and Y275. N6-(pyridoxal phosphate)lysine is present on K276. The pyridoxal 5'-phosphate site is built by W305 and N333.

This sequence belongs to the kynureninase family. As to quaternary structure, homodimer. It depends on pyridoxal 5'-phosphate as a cofactor.

It localises to the cytoplasm. Its subcellular location is the cytosol. It carries out the reaction L-kynurenine + H2O = anthranilate + L-alanine + H(+). The enzyme catalyses 3-hydroxy-L-kynurenine + H2O = 3-hydroxyanthranilate + L-alanine + H(+). It participates in amino-acid degradation; L-kynurenine degradation; L-alanine and anthranilate from L-kynurenine: step 1/1. Its pathway is cofactor biosynthesis; NAD(+) biosynthesis; quinolinate from L-kynurenine: step 2/3. Its function is as follows. Catalyzes the cleavage of L-kynurenine (L-Kyn) and L-3-hydroxykynurenine (L-3OHKyn) into anthranilic acid (AA) and 3-hydroxyanthranilic acid (3-OHAA), respectively. Has a preference for the L-3-hydroxy form. Also has cysteine-conjugate-beta-lyase activity. In Mus musculus (Mouse), this protein is Kynureninase (Kynu).